The primary structure comprises 187 residues: tRNA (cytidine(56)-2'-O)-methyltransferase (187 aa).

S-adenosyl-L-methionine-binding positions include Leu-94 and 120–124 (GAEKV).

It belongs to the aTrm56 family. Homodimer.

It is found in the cytoplasm. The enzyme catalyses cytidine(56) in tRNA + S-adenosyl-L-methionine = 2'-O-methylcytidine(56) in tRNA + S-adenosyl-L-homocysteine + H(+). Specifically catalyzes the AdoMet-dependent 2'-O-ribose methylation of cytidine at position 56 in tRNAs. This Hyperthermus butylicus (strain DSM 5456 / JCM 9403 / PLM1-5) protein is tRNA (cytidine(56)-2'-O)-methyltransferase.